We begin with the raw amino-acid sequence, 307 residues long: Putative oxidoreductase YceM (307 aa).

It belongs to the Gfo/Idh/MocA family.

The protein is Putative oxidoreductase YceM (yceM) of Salmonella typhimurium (strain LT2 / SGSC1412 / ATCC 700720).